The primary structure comprises 180 residues: Insulin-like growth factor 2 (180 aa).

An N-terminal signal peptide occupies residues 1–24 (MGIPMGKSMLVLLTFLAFASCCIA). Residues 25 to 52 (AYRPSETLCGGELVDTLQFVCGDRGFYF) form a b region. 3 disulfide bridges follow: Cys-33-Cys-71, Cys-45-Cys-84, and Cys-70-Cys-75. A c region spans residues 53–64 (SRPASRVSRRSR). The interval 65-85 (GIVEECCFRSCDLALLETYCA) is a. The interval 86-91 (TPAKSE) is d. The propeptide at 92–180 (RDVSTPPTVL…APPEMASNRK (89 aa)) is e peptide. 3 O-linked (GalNAc...) threonine glycosylation sites follow: Thr-96, Thr-99, and Thr-163. The disordered stretch occupies residues 161–180 (LPTQDPAHGGAPPEMASNRK).

Belongs to the insulin family. Interacts with MYORG; this interaction is required for IGF2 secretion. Interacts with integrins ITGAV:ITGB3 and ITGA6:ITGB4; integrin-binding is required for IGF2 signaling. Interacts with IGFBP2. In terms of processing, O-glycosylated with core 1 or possibly core 8 glycans. Thr-96 is a minor glycosylation site compared to Thr-99. Proteolytically processed by PCSK4, proIGF2 is cleaved at Arg-128 and Arg-92 to generate big-IGF2 and mature IGF2. In terms of tissue distribution, expressed in heart, placenta, lung, liver, muscle, kidney, tongue, limb, eye and pancreas.

Its subcellular location is the secreted. In terms of biological role, the insulin-like growth factors possess growth-promoting activity. Major fetal growth hormone in mammals. Plays a key role in regulating fetoplacental development. IGF2 is influenced by placental lactogen. Also involved in tissue differentiation. In adults, involved in glucose metabolism in adipose tissue, skeletal muscle and liver. Acts as a ligand for integrin which is required for IGF2 signaling. Positively regulates myogenic transcription factor MYOD1 function by facilitating the recruitment of transcriptional coactivators, thereby controlling muscle terminal differentiation. Inhibits myoblast differentiation and modulates metabolism via increasing the mitochondrial respiration rate. Functionally, preptin undergoes glucose-mediated co-secretion with insulin, and acts as a physiological amplifier of glucose-mediated insulin secretion. Exhibits osteogenic properties by increasing osteoblast mitogenic activity through phosphoactivation of MAPK1 and MAPK3. This is Insulin-like growth factor 2 from Homo sapiens (Human).